We begin with the raw amino-acid sequence, 481 residues long: Phloretin 4'-O-glucosyltransferase (481 aa).

His-16 serves as the catalytic Proton acceptor. Position 16 (His-16) interacts with an anthocyanidin. 8 residues coordinate UDP-alpha-D-glucose: Gln-354, His-369, Trp-372, Asn-373, Ser-374, Glu-377, Asp-393, and Gln-394.

The protein belongs to the UDP-glycosyltransferase family. Highly expressed in young leaves, at intermediate level in mature leaves and at low levels in flowers and fruits.

It carries out the reaction phloretin + UDP-alpha-D-glucose = trilobatin + UDP + H(+). The enzyme catalyses (2S)-naringenin + UDP-alpha-D-glucose = (2S)-naringenin 7-O-beta-D-glucoside + UDP + H(+). In terms of biological role, glycosyltransferase that possesses phloretin 4'-O-glycosyltransferase activity. Converts phloretin to trilobatin (phloretin 4'-O-glucoside), a potential antioxidant. Can convert with low efficiency phlorizin and trilobatin to their corresponding di-O-glucosides. Can convert with low efficiency naringenin to naringenin-7-O-glucoside. Can convert with low efficiency quercetin to quercetin-7-O-glucoside. This is Phloretin 4'-O-glucosyltransferase from Malus domestica (Apple).